The chain runs to 559 residues: AP-4 complex accessory subunit tepsin (559 aa).

One can recognise an ENTH domain in the interval 2–135 (LDRLAFLQQL…FSESIPSPSH (134 aa)). 3 disordered regions span residues 131–157 (PSPSHTVSAKERSQSGMGSQASSAPAL), 214–290 (AIPS…ESLD), and 472–491 (PNGAANQKNPNGSTEKSDPA). Low complexity-rich tracts occupy residues 144–154 (QSGMGSQASSA) and 266–281 (SRSSDVGSKSGSDGQS). Residues 472–485 (PNGAANQKNPNGST) are compositionally biased toward polar residues.

Its subcellular location is the golgi apparatus. It localises to the trans-Golgi network membrane. The protein resides in the cytoplasmic vesicle. It is found in the cytoplasm. The protein localises to the cytosol. Functionally, may play a role in vesicular trafficking of proteins at the trans-Golgi network. The polypeptide is AP-4 complex accessory subunit tepsin (Xenopus laevis (African clawed frog)).